A 255-amino-acid polypeptide reads, in one-letter code: Small ribosomal subunit protein eS1 (255 aa).

A2 is modified (N-acetylalanine; partial).

Belongs to the eukaryotic ribosomal protein eS1 family. Component of the small ribosomal subunit. Mature ribosomes consist of a small (40S) and a large (60S) subunit. The 40S subunit contains about 33 different proteins and 1 molecule of RNA (18S). The 60S subunit contains about 49 different proteins and 3 molecules of RNA (25S, 5.8S and 5S).

It localises to the cytoplasm. The protein is Small ribosomal subunit protein eS1 of Arthroderma otae (strain ATCC MYA-4605 / CBS 113480) (Microsporum canis).